Here is a 382-residue protein sequence, read N- to C-terminus: Galactokinase (382 aa).

34–37 is a substrate binding site; sequence EHTD. 124–130 contacts ATP; that stretch reads GAGLSSS. Residues S130 and E162 each contribute to the Mg(2+) site. D174 acts as the Proton acceptor in catalysis. Residue Y223 coordinates substrate.

This sequence belongs to the GHMP kinase family. GalK subfamily.

It is found in the cytoplasm. It catalyses the reaction alpha-D-galactose + ATP = alpha-D-galactose 1-phosphate + ADP + H(+). Its pathway is carbohydrate metabolism; galactose metabolism. Functionally, catalyzes the transfer of the gamma-phosphate of ATP to D-galactose to form alpha-D-galactose-1-phosphate (Gal-1-P). The sequence is that of Galactokinase from Escherichia coli O17:K52:H18 (strain UMN026 / ExPEC).